Reading from the N-terminus, the 700-residue chain is Small ribosomal subunit protein uS3c (700 aa).

2 insert regions span residues 88–196 (NCHM…LGKF) and 282–587 (KPCT…FQTR).

It belongs to the universal ribosomal protein uS3 family. Part of the 30S ribosomal subunit.

Its subcellular location is the plastid. The protein resides in the chloroplast. This Tetradesmus obliquus (Green alga) protein is Small ribosomal subunit protein uS3c (rps3).